The following is a 222-amino-acid chain: MAAAGGGAAAAAGRAYSFKVVLLGEGCVGKTSLVLRYCENKFNDKHITTLQASFLTKKLNIGGKRVNLAIWDTAGQERFHALGPIYYRDSNGAILVYDVTDEDSFQKVKNWVKELRKMLGNEICLCIVGNKIDLEKERHVSIQEAESYAESVGAKHYHTSAKQNKGIEELFLDLCKRMIETAQVDERAKGNGSSQAGAARRGVQIIDDEPQAQSSGGCCSSG.

N-acetylalanine is present on alanine 2. GTP contacts are provided by glycine 26, glycine 29, lysine 30, threonine 31, serine 32, asparagine 43, aspartate 44, histidine 46, threonine 48, and threonine 49. Threonine 31 lines the Mg(2+) pocket. A Switch 1 motif is present at residues 41–54 (KFNDKHITTLQASF). The Mg(2+) site is built by threonine 49 and aspartate 72. The short motif at 74–92 (AGQERFHALGPIYYRDSNG) is the Switch 2 element. Residues glycine 75, asparagine 130, lysine 131, aspartate 133, alanine 161, and lysine 162 each contribute to the GTP site. Residues cysteine 218 and cysteine 219 are each lipidated (S-geranylgeranyl cysteine). Cysteine 219 is subject to Cysteine methyl ester. Residues 220–222 (SSG) constitute a propeptide, removed in mature form.

The protein belongs to the small GTPase superfamily. Rab family. Interacts with the cytoplasmic tail of integrins ITGA1, ITGA2, ITGA5, ITGA6, ITGA11 and ITGB1; this interaction is dependent upon its GDP/GTP cycle. Interacts with RABGEF1 (via VPS9 domain). Interacts with ANKRD27. Interacts with VAMP7. Interacts (in GTP-bound form) with VAMP8 in response to starvation; the interaction probably regulates VAMP8 endolysosomal trafficking. Interacts (active GTP-bound form) with TMED10; the interaction is indirect and regulates TMED10 abundance and localization at the Golgi. Mg(2+) is required as a cofactor.

Its subcellular location is the endoplasmic reticulum membrane. It is found in the golgi apparatus. The protein localises to the trans-Golgi network. It localises to the golgi apparatus membrane. The protein resides in the early endosome membrane. Its subcellular location is the cytoplasmic vesicle membrane. It is found in the cleavage furrow. The protein localises to the cell projection. It localises to the neuron projection. It carries out the reaction GTP + H2O = GDP + phosphate + H(+). Regulated by guanine nucleotide exchange factors (GEFs) including ANKRD27 and RABGEF1, which promote the exchange of bound GDP for free GTP. Regulated by GTPase activating proteins (GAPs) which increase the GTP hydrolysis activity. Inhibited by GDP dissociation inhibitors (GDIs). Functionally, the small GTPases Rab are key regulators of intracellular membrane trafficking, from the formation of transport vesicles to their fusion with membranes. Rabs cycle between an inactive GDP-bound form and an active GTP-bound form that is able to recruit to membranes different sets of downstream effectors directly responsible for vesicle formation, movement, tethering and fusion. RAB21 is involved in membrane trafficking control. Regulates integrin internalization and recycling, but does not influence the traffic of endosomally translocated receptors in general. As a result, may regulate cell adhesion and migration. During the mitosis of adherent cells, controls the endosomal trafficking of integrins which is required for the successful completion of cytokinesis. Involved in neurite growth. Following SBF2/MTMT13-mediated activation in response to starvation-induced autophagy, binds to and regulates SNARE protein VAMP8 endolysosomal transport required for SNARE-mediated autophagosome-lysosome fusion. Modulates protein levels of the cargo receptors TMED2 and TMED10, and required for appropriate Golgi localization of TMED10. This Mus musculus (Mouse) protein is Ras-related protein Rab-21.